Consider the following 247-residue polypeptide: Eukaryotic translation initiation factor 3 subunit J (247 aa).

Disordered stretches follow at residues 1 to 64 (MADW…KTLK) and 77 to 101 (EEKRKAEEKQKLEEEDKELTPEEQM). Acidic residues predominate over residues 24–45 (EGEDEDDDIKESWDDDDEDEKK). Positions 43–108 (EKKEDEAKNT…EQMAEKLRRQ (66 aa)) form a coiled coil.

This sequence belongs to the eIF-3 subunit J family. As to quaternary structure, component of the eukaryotic translation initiation factor 3 (eIF-3) complex.

The protein localises to the cytoplasm. Component of the eukaryotic translation initiation factor 3 (eIF-3) complex, which is involved in protein synthesis of a specialized repertoire of mRNAs and, together with other initiation factors, stimulates binding of mRNA and methionyl-tRNAi to the 40S ribosome. The eIF-3 complex specifically targets and initiates translation of a subset of mRNAs involved in cell proliferation. This chain is Eukaryotic translation initiation factor 3 subunit J, found in Nematostella vectensis (Starlet sea anemone).